The chain runs to 382 residues: Intermediate transcription factor 3 large subunit (382 aa).

This sequence belongs to the poxviruses A23 family. Heterodimer of a 45 kDa and a 32 kDa subunit.

Its function is as follows. Acts with RNA polymerase to initiate transcription from intermediate gene promoters. The chain is Intermediate transcription factor 3 large subunit (VITF3L) from Oryctolagus cuniculus (Rabbit).